The sequence spans 782 residues: General transcription and DNA repair factor IIH helicase/translocase subunit XPB (782 aa).

Basic and acidic residues predominate over residues 1-11; sequence MGRKDKSDREK. Disordered regions lie at residues 1-47 and 211-242; these read MGRK…VDES and TISS…SGTQ. The Nuclear localization signal motif lies at 6–17; that stretch reads KSDREKKSKKRY. Residues 19–28 show a composition bias toward acidic residues; it reads EDEEEDEEVI. Residues 211-223 are compositionally biased toward low complexity; the sequence is TISSKSAISKSQQ. Over residues 224–242 the composition is skewed to polar residues; the sequence is DNGGPSSSQPADGQRSGTQ. One can recognise a Helicase ATP-binding domain in the interval 326-487; the sequence is MFGNGRARSG…DLNFLIGPKL (162 aa). Position 339–346 (339–346) interacts with ATP; the sequence is LPCGAGKS. Residues 440-443 carry the DEVH box motif; it reads DEVH. One can recognise a Helicase C-terminal domain in the interval 541–701; that stretch reads RACQFLIRFH…LAGMEEEDLM (161 aa).

Belongs to the helicase family. RAD25/XPB subfamily. In terms of assembly, component of the 7-subunit TFIIH core complex composed of XPB/ERCC3, XPD/ERCC2, GTF2H1, GTF2H2, GTF2H3, GTF2H4 and GTF2H5, which is active in NER. The core complex associates with the 3-subunit CDK-activating kinase (CAK) module composed of CCNH/cyclin H, CDK7 and MNAT1 to form the 10-subunit holoenzyme (holo-TFIIH) active in transcription. Interacts with PUF60. Interacts with ATF7IP. Interacts with Epstein-Barr virus EBNA2.

It localises to the nucleus. The enzyme catalyses Couples ATP hydrolysis with the unwinding of duplex DNA by translocating in the 3'-5' direction.. It catalyses the reaction ATP + H2O = ADP + phosphate + H(+). In terms of biological role, ATP-dependent 3'-5' DNA helicase/translocase; binds dsDNA rather than ssDNA, unzipping it in a translocase rather than classical helicase activity. Component of the general transcription and DNA repair factor IIH (TFIIH) core complex. When complexed to CDK-activating kinase (CAK), involved in RNA transcription by RNA polymerase II. The ATPase activity of XPB/ERCC3, but not its helicase activity, is required for DNA opening; it may wrap around the damaged DNA wedging it open, causing localized melting and twisting that allows XPD/ERCC2 helicase to anchor. The ATP-dependent helicase activity of XPB/ERCC3 may be required for promoter escape. Also involved in transcription-coupled nucleotide excision repair (NER) of damaged DNA. In NER, TFIIH acts by opening DNA around the lesion to allow the excision of the damaged oligonucleotide and its replacement by a new DNA fragment. The chain is General transcription and DNA repair factor IIH helicase/translocase subunit XPB (ercc3) from Danio rerio (Zebrafish).